Reading from the N-terminus, the 718-residue chain is U-box domain-containing protein 5 (718 aa).

The 75-residue stretch at 218–292 (TLPEKFKCTL…SEWCAKNGLD (75 aa)) folds into the U-box domain. 3 ARM repeats span residues 493–532 (PHGP…NLSS), 534–571 (MEIC…NLCS), and 573–613 (EKGR…QLCV). The tract at residues 662–704 (KEEEEEVSSRPEGRTTASPTSQVVTPVTHPEPVKITPSPKKSG) is disordered. A compositionally biased stretch (polar residues) spans 676-686 (TTASPTSQVVT).

It catalyses the reaction S-ubiquitinyl-[E2 ubiquitin-conjugating enzyme]-L-cysteine + [acceptor protein]-L-lysine = [E2 ubiquitin-conjugating enzyme]-L-cysteine + N(6)-ubiquitinyl-[acceptor protein]-L-lysine.. It functions in the pathway protein modification; protein ubiquitination. Its function is as follows. Functions as an E3 ubiquitin ligase. This chain is U-box domain-containing protein 5 (PUB5), found in Arabidopsis thaliana (Mouse-ear cress).